The following is a 382-amino-acid chain: Glutamine synthetase cytosolic isozyme (382 aa).

Residues 36-118 (GKICAEYVWI…VMCDCYEPPK (83 aa)) enclose the GS beta-grasp domain. A GS catalytic domain is found at 135 to 382 (TRFACAEVME…RLIVETTILL (248 aa)).

This sequence belongs to the glutamine synthetase family. As to quaternary structure, homooctamer.

Its subcellular location is the cytoplasm. It catalyses the reaction L-glutamate + NH4(+) + ATP = L-glutamine + ADP + phosphate + H(+). This chain is Glutamine synthetase cytosolic isozyme (GLN1), found in Chlamydomonas reinhardtii (Chlamydomonas smithii).